The chain runs to 509 residues: Dihydrolipoyl dehydrogenase, mitochondrial (509 aa).

A mitochondrion-targeting transit peptide spans 1 to 35 (MQSWSRVYCSLAKKGHFNRLSHGLQGASSVPLRTY). K66 carries the N6-acetyllysine; alternate modification. N6-succinyllysine; alternate is present on K66. FAD is bound by residues 71-80 (EKNETLGGTC) and K89. C80 and C85 form a disulfide bridge. N6-acetyllysine; alternate is present on residues K104, K122, K132, and K143. N6-succinyllysine; alternate is present on residues K104, K122, K132, and K143. FAD is bound at residue G154. Position 159 is an N6-succinyllysine (K159). 183 to 185 (TGS) provides a ligand contact to FAD. Residues 220 to 227 (GAGVIGVE) and E243 contribute to the NAD(+) site. K273 and K277 each carry N6-succinyllysine. V278 provides a ligand contact to NAD(+). Phosphoserine occurs at positions 285 and 297. G314 is a binding site for NAD(+). K346 bears the N6-acetyllysine mark. FAD is bound by residues D355 and 361–364 (MLAH). Position 410 is an N6-acetyllysine; alternate (K410). An N6-succinyllysine; alternate modification is found at K410. N6-acetyllysine is present on residues K417 and K420. K430 bears the N6-succinyllysine mark. The active-site Proton acceptor is H487. A Phosphoserine modification is found at S502. K505 is modified (N6-acetyllysine; alternate). K505 bears the N6-succinyllysine; alternate mark.

This sequence belongs to the class-I pyridine nucleotide-disulfide oxidoreductase family. Homodimer. Part of the multimeric pyruvate dehydrogenase complex that contains multiple copies of pyruvate dehydrogenase (subunits PDHA (PDHA1 or PDHA2) and PDHB, E1), dihydrolipoamide acetyltransferase (DLAT, E2) and lipoamide dehydrogenase (DLD, E3). These subunits are bound to an inner core composed of about 48 DLAT and 12 PDHX molecules (by non covalent bonds). The 2-oxoglutarate dehydrogenase complex is composed of OGDH (2-oxoglutarate dehydrogenase; E1), DLST (dihydrolipoamide succinyltransferase; E2), DLD (dihydrolipoamide dehydrogenase; E3) and the assembly factor KGD4. It contains multiple copies of the three enzymatic components (E1, E2 and E3). In the nucleus, the 2-oxoglutarate dehydrogenase complex associates with KAT2A. Interacts with PDHX. It depends on FAD as a cofactor. Post-translationally, tyrosine phosphorylated.

Its subcellular location is the mitochondrion matrix. It is found in the nucleus. It localises to the cell projection. The protein localises to the cilium. The protein resides in the flagellum. Its subcellular location is the cytoplasmic vesicle. It is found in the secretory vesicle. It localises to the acrosome. The enzyme catalyses N(6)-[(R)-dihydrolipoyl]-L-lysyl-[protein] + NAD(+) = N(6)-[(R)-lipoyl]-L-lysyl-[protein] + NADH + H(+). Functionally, lipoamide dehydrogenase is a component of the glycine cleavage system as well as an E3 component of three alpha-ketoacid dehydrogenase complexes (pyruvate-, alpha-ketoglutarate-, and branched-chain amino acid-dehydrogenase complex). The 2-oxoglutarate dehydrogenase complex is mainly active in the mitochondrion. A fraction of the 2-oxoglutarate dehydrogenase complex also localizes in the nucleus and is required for lysine succinylation of histones: associates with KAT2A on chromatin and provides succinyl-CoA to histone succinyltransferase KAT2A. In monomeric form may have additional moonlighting function as serine protease. Involved in the hyperactivation of spermatazoa during capacitation and in the spermatazoal acrosome reaction. The protein is Dihydrolipoyl dehydrogenase, mitochondrial (Dld) of Rattus norvegicus (Rat).